Consider the following 150-residue polypeptide: Late promoter-activating protein (150 aa).

In terms of biological role, trans-activating factor involved in the late regulation of the P1 lytic growth cycle. May be the transcriptional activator of all late P1 functions. This Escherichia phage P1 (Bacteriophage P1) protein is Late promoter-activating protein (lpa).